The primary structure comprises 543 residues: Bifunctional riboflavin biosynthesis protein RIBA 1, chloroplastic (543 aa).

The transit peptide at 1-56 (MSSINLSSSSPSTISLSRSRLSQSSTTLLHGLHRVTLPSNHPLSTFSIKTNTGKVK) directs the protein to the chloroplast. The tract at residues 57 to 328 (AAVISREDDL…IADLIRYRRK (272 aa)) is DHBP synthase. D-ribulose 5-phosphate-binding positions include 152–153 (RE), D157, 267–271 (RAGHT), and E291. E153 is a binding site for Mg(2+). Residue H270 coordinates Mg(2+). The GTP cyclohydrolase II stretch occupies residues 329–543 (RDKLVERASA…VEKIESESES (215 aa)). Position 379 to 383 (379 to 383 (RVHSE)) interacts with GTP. C384, C395, and C397 together coordinate Zn(2+). GTP-binding positions include Q400, 423–425 (EGR), and T445. D457 (proton acceptor; for GTP cyclohydrolase activity) is an active-site residue. The active-site Nucleophile; for GTP cyclohydrolase activity is R459. Residues T480 and K485 each coordinate GTP.

It in the N-terminal section; belongs to the DHBP synthase family. In the C-terminal section; belongs to the GTP cyclohydrolase II family. Requires Mg(2+) as cofactor. Mn(2+) is required as a cofactor. It depends on Zn(2+) as a cofactor. As to expression, expressed in leaves, shoots, roots, flowers and siliques.

It is found in the plastid. The protein resides in the chloroplast. It catalyses the reaction D-ribulose 5-phosphate = (2S)-2-hydroxy-3-oxobutyl phosphate + formate + H(+). The enzyme catalyses GTP + 4 H2O = 2,5-diamino-6-hydroxy-4-(5-phosphoribosylamino)-pyrimidine + formate + 2 phosphate + 3 H(+). Its pathway is cofactor biosynthesis; riboflavin biosynthesis; 2-hydroxy-3-oxobutyl phosphate from D-ribulose 5-phosphate: step 1/1. It participates in cofactor biosynthesis; riboflavin biosynthesis; 5-amino-6-(D-ribitylamino)uracil from GTP: step 1/4. In terms of biological role, involved in riboflavin biosynthesis. Catalyzes both the conversion of D-ribulose 5-phosphate to formate and 3,4-dihydroxy-2-butanone 4-phosphate and the conversion of GTP to 2,5-diamino-6-ribosylamino-4(3H)-pyrimidinone 5'-phosphate (DARP), formate and pyrophosphate. RIBA2 and RIBA3 together are not able to complement the loss of function of RIBA1. This Arabidopsis thaliana (Mouse-ear cress) protein is Bifunctional riboflavin biosynthesis protein RIBA 1, chloroplastic (RIBA1).